The sequence spans 578 residues: Lysine--tRNA ligase (578 aa).

Residues Glu-414 and Glu-421 each coordinate Mg(2+).

Belongs to the class-II aminoacyl-tRNA synthetase family. In terms of assembly, homodimer. Mg(2+) is required as a cofactor.

Its subcellular location is the cytoplasm. The catalysed reaction is tRNA(Lys) + L-lysine + ATP = L-lysyl-tRNA(Lys) + AMP + diphosphate. In Porphyromonas gingivalis (strain ATCC 33277 / DSM 20709 / CIP 103683 / JCM 12257 / NCTC 11834 / 2561), this protein is Lysine--tRNA ligase.